Consider the following 216-residue polypeptide: MOB kinase activator 1B (216 aa).

The residue at position 2 (S2) is an N-acetylserine. 2 positions are modified to phosphothreonine; by STK4/MST1: T12 and T35. Zn(2+) is bound by residues C79, C84, H161, and H166.

Belongs to the MOB1/phocein family. Binds STK38L. Interacts with LATS1 and LATS2. In terms of processing, phosphorylated by STK3/MST2 and STK4/MST1 and this phosphorylation enhances its binding to LATS1. Adrenal gland, bone marrow, brain, lung, placenta, prostate, salivary gland, skeletal muscle, testis, thymus, thyroid gland, uterus, colon with mucosa, fetal brain and fetal liver.

It localises to the cytoplasm. Its subcellular location is the nucleus. Its function is as follows. Activator of LATS1/2 in the Hippo signaling pathway which plays a pivotal role in organ size control and tumor suppression by restricting proliferation and promoting apoptosis. The core of this pathway is composed of a kinase cascade wherein STK3/MST2 and STK4/MST1, in complex with its regulatory protein SAV1, phosphorylates and activates LATS1/2 in complex with its regulatory protein MOB1, which in turn phosphorylates and inactivates YAP1 oncoprotein and WWTR1/TAZ. Phosphorylation of YAP1 by LATS1/2 inhibits its translocation into the nucleus to regulate cellular genes important for cell proliferation, cell death, and cell migration. Stimulates the kinase activity of STK38L. In Homo sapiens (Human), this protein is MOB kinase activator 1B.